A 36-amino-acid polypeptide reads, in one-letter code: Ostricacin-1 (36 aa).

Cystine bridges form between cysteine 3–cysteine 29, cysteine 8–cysteine 23, and cysteine 13–cysteine 30.

It localises to the secreted. Has antibacterial activity against the Gram-positive bacteria S.aureus 1056 MRSA (MIC=1.25 ug/ml) and S.aureus NCTC 4163 (MIC=6.7 ug/ml), and the Gram-negative bacteria E.coli O157:H7 (MIC=0.96 ug/ml) and E.coli 0111 (MIC=6.7 ug/ml). Does not have antifungal activity against the yeast C.albicans 3153A. The polypeptide is Ostricacin-1 (Struthio camelus (Common ostrich)).